We begin with the raw amino-acid sequence, 504 residues long: ATP synthase subunit beta (504 aa).

181–188 provides a ligand contact to ATP; the sequence is GGAGVGKT.

This sequence belongs to the ATPase alpha/beta chains family. F-type ATPases have 2 components, CF(1) - the catalytic core - and CF(0) - the membrane proton channel. CF(1) has five subunits: alpha(3), beta(3), gamma(1), delta(1), epsilon(1). CF(0) has three main subunits: a(1), b(2) and c(9-12). The alpha and beta chains form an alternating ring which encloses part of the gamma chain. CF(1) is attached to CF(0) by a central stalk formed by the gamma and epsilon chains, while a peripheral stalk is formed by the delta and b chains.

The protein localises to the cell inner membrane. The catalysed reaction is ATP + H2O + 4 H(+)(in) = ADP + phosphate + 5 H(+)(out). In terms of biological role, produces ATP from ADP in the presence of a proton gradient across the membrane. The catalytic sites are hosted primarily by the beta subunits. The protein is ATP synthase subunit beta of Ehrlichia ruminantium (strain Gardel).